We begin with the raw amino-acid sequence, 853 residues long: DNA mismatch repair protein MutS (853 aa).

614 to 621 (GPNMGGKS) is an ATP binding site.

This sequence belongs to the DNA mismatch repair MutS family.

Functionally, this protein is involved in the repair of mismatches in DNA. It is possible that it carries out the mismatch recognition step. This protein has a weak ATPase activity. In Shigella flexneri serotype 5b (strain 8401), this protein is DNA mismatch repair protein MutS.